The following is a 134-amino-acid chain: Small ribosomal subunit protein uS8c (134 aa).

It belongs to the universal ribosomal protein uS8 family. As to quaternary structure, part of the 30S ribosomal subunit.

The protein resides in the plastid. Its subcellular location is the chloroplast. Its function is as follows. One of the primary rRNA binding proteins, it binds directly to 16S rRNA central domain where it helps coordinate assembly of the platform of the 30S subunit. The protein is Small ribosomal subunit protein uS8c (rps8) of Eucalyptus globulus subsp. globulus (Tasmanian blue gum).